The primary structure comprises 379 residues: UDP-4-amino-4-deoxy-L-arabinose--oxoglutarate aminotransferase (379 aa).

The residue at position 182 (K182) is an N6-(pyridoxal phosphate)lysine.

Belongs to the DegT/DnrJ/EryC1 family. ArnB subfamily. As to quaternary structure, homodimer. Pyridoxal 5'-phosphate is required as a cofactor.

The catalysed reaction is UDP-4-amino-4-deoxy-beta-L-arabinose + 2-oxoglutarate = UDP-beta-L-threo-pentopyranos-4-ulose + L-glutamate. It participates in nucleotide-sugar biosynthesis; UDP-4-deoxy-4-formamido-beta-L-arabinose biosynthesis; UDP-4-deoxy-4-formamido-beta-L-arabinose from UDP-alpha-D-glucuronate: step 2/3. Its pathway is bacterial outer membrane biogenesis; lipopolysaccharide biosynthesis. Functionally, catalyzes the conversion of UDP-4-keto-arabinose (UDP-Ara4O) to UDP-4-amino-4-deoxy-L-arabinose (UDP-L-Ara4N). The modified arabinose is attached to lipid A and is required for resistance to polymyxin and cationic antimicrobial peptides. The protein is UDP-4-amino-4-deoxy-L-arabinose--oxoglutarate aminotransferase of Klebsiella pneumoniae (strain 342).